The sequence spans 246 residues: Acetoacetate decarboxylase (246 aa).

Lys-116 (schiff-base intermediate with acetoacetate) is an active-site residue.

Belongs to the ADC family.

The catalysed reaction is acetoacetate + H(+) = acetone + CO2. Catalyzes the conversion of acetoacetate to acetone and carbon dioxide. This chain is Acetoacetate decarboxylase, found in Burkholderia vietnamiensis (strain G4 / LMG 22486) (Burkholderia cepacia (strain R1808)).